The following is a 107-amino-acid chain: Replication initiation control protein YabA (107 aa).

Zn(2+) is bound by residues histidine 81, cysteine 83, cysteine 97, and cysteine 100.

The protein belongs to the YabA family. In terms of assembly, homotetramer. Interacts with both DnaA and DnaN, acting as a bridge between these two proteins. Requires Zn(2+) as cofactor.

Its subcellular location is the cytoplasm. It localises to the nucleoid. Involved in control of chromosome replication initiation. Inhibits the cooperative binding of DnaA to the oriC region, thus negatively regulating initiation of chromosome replication. Inhibits the ability of DnaA-ATP to form a helix on DNA; does not disassemble preformed DnaA-DNA helices. Decreases the residence time of DnaA on the chromosome at its binding sites (oriC, replication forks and promoter-binding sites). Tethers DnaA to the replication machinery via the DNA polymerase beta sliding clamp subunit (dnaN). Associates with oriC and other DnaA targets on the chromosome in a DnaA-dependent manner. This chain is Replication initiation control protein YabA, found in Streptococcus equi subsp. zooepidemicus (strain MGCS10565).